We begin with the raw amino-acid sequence, 573 residues long: Sulfate adenylyltransferase (573 aa).

The segment at methionine 1 to tyrosine 169 is N-terminal. A catalytic region spans residues aspartate 170–glutamine 394. Glutamine 197 is a binding site for sulfate. Residues glutamine 197–asparagine 200 and glycine 291–histidine 294 each bind ATP. Catalysis depends on residues threonine 198, arginine 199, and asparagine 200. A sulfate-binding site is contributed by arginine 199. Residue alanine 295 participates in sulfate binding. Methionine 333 lines the ATP pocket. The segment at glutamine 395 to phenylalanine 573 is allosteric regulation domain; adenylyl-sulfate kinase-like. Residues glutamate 434–arginine 437, arginine 451, isoleucine 477–alanine 478, and arginine 515 each bind 3'-phosphoadenylyl sulfate.

The protein in the N-terminal section; belongs to the sulfate adenylyltransferase family. It in the C-terminal section; belongs to the APS kinase family. Homohexamer. Dimer of trimers.

It localises to the cytoplasm. It carries out the reaction sulfate + ATP + H(+) = adenosine 5'-phosphosulfate + diphosphate. Its pathway is sulfur metabolism; hydrogen sulfide biosynthesis; sulfite from sulfate: step 1/3. Allosterically inhibited by 3'-phosphoadenosine 5'-phosphosulfate (PAPS). Catalyzes the first intracellular reaction of sulfate assimilation, forming adenosine-5'-phosphosulfate (APS) from inorganic sulfate and ATP. Plays an important role in sulfate activation as a component of the biosynthesis pathway of sulfur-containing amino acids. The sequence is that of Sulfate adenylyltransferase (cys-11) from Neurospora crassa (strain ATCC 24698 / 74-OR23-1A / CBS 708.71 / DSM 1257 / FGSC 987).